Consider the following 49-residue polypeptide: Large ribosomal subunit protein bL33A (49 aa).

A disordered region spans residues 21-49 (KNKRNNPERVEMKKYCSRDNKHTLHRETK). Residues 25-49 (NNPERVEMKKYCSRDNKHTLHRETK) are compositionally biased toward basic and acidic residues.

This sequence belongs to the bacterial ribosomal protein bL33 family.

The sequence is that of Large ribosomal subunit protein bL33A from Staphylococcus epidermidis (strain ATCC 35984 / DSM 28319 / BCRC 17069 / CCUG 31568 / BM 3577 / RP62A).